The sequence spans 198 residues: Recombination protein RecR (198 aa).

The C4-type zinc-finger motif lies at 57–72; that stretch reads CSICGNLTESDPCAIC. Residues 80–175 form the Toprim domain; sequence TTILVVEESK…KVTRLARGLA (96 aa).

Belongs to the RecR family.

May play a role in DNA repair. It seems to be involved in an RecBC-independent recombinational process of DNA repair. It may act with RecF and RecO. The chain is Recombination protein RecR from Lactococcus lactis subsp. lactis (strain IL1403) (Streptococcus lactis).